Here is a 145-residue protein sequence, read N- to C-terminus: D-aminoacyl-tRNA deacylase (145 aa).

The Gly-cisPro motif, important for rejection of L-amino acids motif lies at 137 to 138 (GP).

This sequence belongs to the DTD family. In terms of assembly, homodimer.

Its subcellular location is the cytoplasm. It carries out the reaction glycyl-tRNA(Ala) + H2O = tRNA(Ala) + glycine + H(+). It catalyses the reaction a D-aminoacyl-tRNA + H2O = a tRNA + a D-alpha-amino acid + H(+). Functionally, an aminoacyl-tRNA editing enzyme that deacylates mischarged D-aminoacyl-tRNAs. Also deacylates mischarged glycyl-tRNA(Ala), protecting cells against glycine mischarging by AlaRS. Acts via tRNA-based rather than protein-based catalysis; rejects L-amino acids rather than detecting D-amino acids in the active site. By recycling D-aminoacyl-tRNA to D-amino acids and free tRNA molecules, this enzyme counteracts the toxicity associated with the formation of D-aminoacyl-tRNA entities in vivo and helps enforce protein L-homochirality. This is D-aminoacyl-tRNA deacylase from Shewanella pealeana (strain ATCC 700345 / ANG-SQ1).